The sequence spans 296 residues: Bifunctional protein FolD (296 aa).

NADP(+) contacts are provided by residues 166–168 (GRS), Ser191, and Ile232.

Belongs to the tetrahydrofolate dehydrogenase/cyclohydrolase family. As to quaternary structure, homodimer.

The catalysed reaction is (6R)-5,10-methylene-5,6,7,8-tetrahydrofolate + NADP(+) = (6R)-5,10-methenyltetrahydrofolate + NADPH. It catalyses the reaction (6R)-5,10-methenyltetrahydrofolate + H2O = (6R)-10-formyltetrahydrofolate + H(+). The protein operates within one-carbon metabolism; tetrahydrofolate interconversion. Its function is as follows. Catalyzes the oxidation of 5,10-methylenetetrahydrofolate to 5,10-methenyltetrahydrofolate and then the hydrolysis of 5,10-methenyltetrahydrofolate to 10-formyltetrahydrofolate. The polypeptide is Bifunctional protein FolD (Cereibacter sphaeroides (strain ATCC 17023 / DSM 158 / JCM 6121 / CCUG 31486 / LMG 2827 / NBRC 12203 / NCIMB 8253 / ATH 2.4.1.) (Rhodobacter sphaeroides)).